The primary structure comprises 142 residues: Organic hydroperoxide resistance protein-like 2 (142 aa).

Belongs to the OsmC/Ohr family.

This is Organic hydroperoxide resistance protein-like 2 from Staphylococcus epidermidis (strain ATCC 12228 / FDA PCI 1200).